The chain runs to 462 residues: Cytokine-like nuclear factor N-PAC (462 aa).

The 59-residue stretch at 8–66 folds into the PWWP domain; it reads IGDLVWGKLGRYPPWPGKVVSPPKDLKKPRGKKCFFVKFFGTEDHAWIKVEQLKPYHPH. The segment covering 91–111 has biased composition (basic and acidic residues); it reads KKAKGKDQSHSDDKSKSDKGR. Positions 91-139 are disordered; that stretch reads KKAKGKDQSHSDDKSKSDKGRKAAKPMKIIEEDDEDAFKGGSSDKPASS. Positions 169-462 are dehydrogenase domain; sequence GSITPTDKRI…MSAVYRAYIH (294 aa). NAD(+)-binding positions include 179-193, Thr-270, and Lys-414; that span reads GFLGLGLMGSGVVSN.

This sequence belongs to the HIBADH-related family. NP60 subfamily. In terms of assembly, homotetramere. Binds to mononucleosomes.

It localises to the nucleus. The protein resides in the chromosome. Its function is as follows. May have oxidoreductase activity. Regulates p38 MAP kinase activity by mediating stress activation of mapk14 and specifically regulating mapk14 signaling. Functionally, cytokine-like nuclear factor with chromatin gene reader activity involved in chromatin modification and regulation of gene expression. Acts as a nucleosome-destabilizing factor that is recruited to genes during transcriptional activation. Recognizes and binds histone H3 without a preference for specific epigenetic markers and also binds DNA. Interacts with KDM1B and promotes its histone demethylase activity by facilitating the capture of H3 tails, they form a multifunctional enzyme complex that modifies transcribed chromatin and facilitates Pol II transcription through nucleosomes. The sequence is that of Cytokine-like nuclear factor N-PAC (glyr1) from Danio rerio (Zebrafish).